A 152-amino-acid polypeptide reads, in one-letter code: Superoxide dismutase [Cu-Zn] (152 aa).

Cu cation-binding residues include H45, H47, and H62. An intrachain disulfide couples C56 to C145. The Zn(2+) site is built by H62, H70, H79, and D82. H119 contributes to the Cu cation binding site.

It belongs to the Cu-Zn superoxide dismutase family. As to quaternary structure, homodimer. It depends on Cu cation as a cofactor. The cofactor is Zn(2+).

It is found in the cytoplasm. The catalysed reaction is 2 superoxide + 2 H(+) = H2O2 + O2. In terms of biological role, destroys radicals which are normally produced within the cells and which are toxic to biological systems. This is Superoxide dismutase [Cu-Zn] (SODCC) from Pisum sativum (Garden pea).